Reading from the N-terminus, the 141-residue chain is ATP synthase epsilon chain (141 aa).

It belongs to the ATPase epsilon chain family. In terms of assembly, F-type ATPases have 2 components, CF(1) - the catalytic core - and CF(0) - the membrane proton channel. CF(1) has five subunits: alpha(3), beta(3), gamma(1), delta(1), epsilon(1). CF(0) has three main subunits: a, b and c.

The protein localises to the cell inner membrane. Its function is as follows. Produces ATP from ADP in the presence of a proton gradient across the membrane. This is ATP synthase epsilon chain from Pseudomonas fluorescens (strain ATCC BAA-477 / NRRL B-23932 / Pf-5).